Reading from the N-terminus, the 320-residue chain is Biotin synthase (320 aa).

In terms of domain architecture, Radical SAM core spans 43 to 270 (GAVQKSQLLS…KSWVRLSAGR (228 aa)). Residues C58, C62, and C65 each contribute to the [4Fe-4S] cluster site. [2Fe-2S] cluster contacts are provided by C102, C133, C193, and R265.

Belongs to the radical SAM superfamily. Biotin synthase family. As to quaternary structure, homodimer. It depends on [4Fe-4S] cluster as a cofactor. The cofactor is [2Fe-2S] cluster.

It carries out the reaction (4R,5S)-dethiobiotin + (sulfur carrier)-SH + 2 reduced [2Fe-2S]-[ferredoxin] + 2 S-adenosyl-L-methionine = (sulfur carrier)-H + biotin + 2 5'-deoxyadenosine + 2 L-methionine + 2 oxidized [2Fe-2S]-[ferredoxin]. Its pathway is cofactor biosynthesis; biotin biosynthesis; biotin from 7,8-diaminononanoate: step 2/2. Functionally, catalyzes the conversion of dethiobiotin (DTB) to biotin by the insertion of a sulfur atom into dethiobiotin via a radical-based mechanism. This Hyphomonas neptunium (strain ATCC 15444) protein is Biotin synthase.